A 167-amino-acid polypeptide reads, in one-letter code: Photosystem I assembly protein Ycf3 (167 aa).

3 TPR repeats span residues 35-68 (AFTY…EVDA), 72-105 (SYIF…NPSL), and 120-153 (GEQA…APTN).

This sequence belongs to the Ycf3 family.

It is found in the plastid. Its subcellular location is the chloroplast thylakoid membrane. Essential for the assembly of the photosystem I (PSI) complex. May act as a chaperone-like factor to guide the assembly of the PSI subunits. The protein is Photosystem I assembly protein Ycf3 of Pleurastrum terricola (Filamentous green alga).